The following is a 274-amino-acid chain: 2,3,4,5-tetrahydropyridine-2,6-dicarboxylate N-succinyltransferase (274 aa).

Residues Arg103 and Asp140 each contribute to the substrate site.

Belongs to the transferase hexapeptide repeat family. As to quaternary structure, homotrimer.

It localises to the cytoplasm. It catalyses the reaction (S)-2,3,4,5-tetrahydrodipicolinate + succinyl-CoA + H2O = (S)-2-succinylamino-6-oxoheptanedioate + CoA. It participates in amino-acid biosynthesis; L-lysine biosynthesis via DAP pathway; LL-2,6-diaminopimelate from (S)-tetrahydrodipicolinate (succinylase route): step 1/3. The chain is 2,3,4,5-tetrahydropyridine-2,6-dicarboxylate N-succinyltransferase from Actinobacillus pleuropneumoniae serotype 5b (strain L20).